The sequence spans 948 residues: FRIGIDA-like protein 5 (948 aa).

Positions 47–164 (DSTRSVLEER…VEKHRERIVA (118 aa)) form a coiled coil. Disordered stretches follow at residues 447–500 (ESAQ…APSQ), 518–538 (VKESGADHQPDTIATHPSGTE), and 804–894 (RNTS…YPSH). Composition is skewed to basic and acidic residues over residues 459-475 (SYEKRQSTTKGVEKSEA) and 518-527 (VKESGADHQP). The segment covering 807-817 (SNGSGSGSASS) has biased composition (low complexity). Residues 818-830 (KPDSTIKQSQTAK) show a composition bias toward polar residues. The span at 861–872 (FSKKNKRGKKRS) shows a compositional bias: basic residues. A compositionally biased stretch (polar residues) spans 873 to 894 (MSGNNQSSGHIASHTSNHYPSH).

Belongs to the Frigida family. In terms of tissue distribution, expressed at low levels during seed development.

The protein is FRIGIDA-like protein 5 (FRL5) of Arabidopsis thaliana (Mouse-ear cress).